A 796-amino-acid polypeptide reads, in one-letter code: Potassium transporter 10 (796 aa).

The interval 1–30 (MAGRVESSIGGGEIDEEGDERGSMWDLDQS) is disordered. Over 1-58 (MAGRVESSIGGGEIDEEGDERGSMWDLDQSLDQPMDEEAGRLRNMYREKKFSAFLLLQ) the chain is Cytoplasmic. The helical transmembrane segment at 59–79 (LSFQSLGVVYGDLGTSPLYVF) threads the bilayer. Residues 80–95 (YNTFPRGIKDPEDIIG) are Extracellular-facing. The helical transmembrane segment at 96 to 116 (ALSLIIYSLTLIPLLKYVFVV) threads the bilayer. At 117 to 184 (CKANDNGQGG…ENGTSRKNAL (68 aa)) the chain is on the cytoplasmic side. A helical transmembrane segment spans residues 185–205 (LILVLVGTCMVIGDGILTPAI). Residues 206 to 217 (SVLSAAGGLRVN) lie on the Extracellular side of the membrane. The chain crosses the membrane as a helical span at residues 218 to 238 (LPHINNGIVVVVAVVILVSLF). Residues 239–248 (SVQHYGTDRV) lie on the Cytoplasmic side of the membrane. A helical membrane pass occupies residues 249–269 (GWLFAPIVFLWFLFIASIGMF). The Extracellular portion of the chain corresponds to 270–298 (NIWKHDPSVLKAFSPVYIFRYFKRGGQDR). Residues 299-319 (WTSLGGIMLSITGIEALFADL) form a helical membrane-spanning segment. Topologically, residues 320–321 (SH) are cytoplasmic. A helical transmembrane segment spans residues 322-342 (FPVSAVQFAFTVIVFPCLLLA). At 343–368 (YSGQAAYLRKYPHHVEDAFYQSIPKR) the chain is on the extracellular side. A helical transmembrane segment spans residues 369-389 (VYWPMFIIATAAAIVASQATI). At 390–420 (SATFSLIKQALAHGCFPRVKVVHTSRKFLGQ) the chain is on the cytoplasmic side. The chain crosses the membrane as a helical span at residues 421 to 441 (IYVPDINWILMILCIAVTAGF). Residues 442-453 (KNQNQIGNAYGT) lie on the Extracellular side of the membrane. A helical transmembrane segment spans residues 454-474 (AVVIVMLVTTLLMMLIMILVW). Residues 475-480 (RCHWVL) lie on the Cytoplasmic side of the membrane. A helical transmembrane segment spans residues 481-501 (VLLFTLLSLVVECTYFSAVLF). Topologically, residues 502–505 (KVNQ) are extracellular. The helical transmembrane segment at 506-526 (GGWVPLVIAAAFLVIMYVWHY) threads the bilayer. Over 527–796 (GTLKRYEFEM…LLNVGQIFYV (270 aa)) the chain is Cytoplasmic.

This sequence belongs to the HAK/KUP transporter (TC 2.A.72.3) family.

It is found in the cell membrane. Putative potassium transporter. This chain is Potassium transporter 10 (POT10), found in Arabidopsis thaliana (Mouse-ear cress).